The chain runs to 222 residues: Peptide methionine sulfoxide reductase MsrA (222 aa).

Cys-54 is a catalytic residue.

Belongs to the MsrA Met sulfoxide reductase family.

It catalyses the reaction L-methionyl-[protein] + [thioredoxin]-disulfide + H2O = L-methionyl-(S)-S-oxide-[protein] + [thioredoxin]-dithiol. The catalysed reaction is [thioredoxin]-disulfide + L-methionine + H2O = L-methionine (S)-S-oxide + [thioredoxin]-dithiol. Its function is as follows. Has an important function as a repair enzyme for proteins that have been inactivated by oxidation. Catalyzes the reversible oxidation-reduction of methionine sulfoxide in proteins to methionine. The chain is Peptide methionine sulfoxide reductase MsrA from Methylococcus capsulatus (strain ATCC 33009 / NCIMB 11132 / Bath).